A 396-amino-acid chain; its full sequence is Phosphoglycerate kinase (396 aa).

Substrate contacts are provided by residues 21–23, arginine 36, 59–62, arginine 119, and arginine 156; these read DFN and HLGK. Residues lysine 206, glycine 294, glutamate 325, and 352-355 each bind ATP; that span reads GGDS.

It belongs to the phosphoglycerate kinase family. Monomer.

The protein resides in the cytoplasm. It carries out the reaction (2R)-3-phosphoglycerate + ATP = (2R)-3-phospho-glyceroyl phosphate + ADP. It participates in carbohydrate degradation; glycolysis; pyruvate from D-glyceraldehyde 3-phosphate: step 2/5. This Staphylococcus aureus (strain bovine RF122 / ET3-1) protein is Phosphoglycerate kinase.